The chain runs to 130 residues: Peptide methionine sulfoxide reductase MsrB (130 aa).

The MsrB domain maps to 1–122 (MKKREDMTEM…NSVSMAFEDS (122 aa)). Residues C39, C42, C88, and C91 each contribute to the Zn(2+) site. C111 (nucleophile) is an active-site residue.

Belongs to the MsrB Met sulfoxide reductase family. The cofactor is Zn(2+).

The enzyme catalyses L-methionyl-[protein] + [thioredoxin]-disulfide + H2O = L-methionyl-(R)-S-oxide-[protein] + [thioredoxin]-dithiol. This Pasteurella multocida (strain Pm70) protein is Peptide methionine sulfoxide reductase MsrB.